A 221-amino-acid polypeptide reads, in one-letter code: 21 kDa seed protein (221 aa).

Residues 1 to 26 (MKTATAVVLLLFAFTSKSYFFGVANA) form the signal peptide. Cysteine 69 and cysteine 116 are disulfide-bonded.

It belongs to the protease inhibitor I3 (leguminous Kunitz-type inhibitor) family.

This Theobroma cacao (Cacao) protein is 21 kDa seed protein (ASP).